The sequence spans 55 residues: ATP synthase small subunit 6, mitochondrial (55 aa).

A mitochondrion-targeting transit peptide spans 1–15; the sequence is MRQFDPWPVFFRREW. A helical membrane pass occupies residues 20 to 39; sequence PFLVGFAVTGAIITKMSLGF.

Belongs to the ATPase 6 subunit family.

It is found in the mitochondrion inner membrane. Mitochondrial membrane ATP synthase (F(1)F(0) ATP synthase or Complex V) produces ATP from ADP in the presence of a proton gradient across the membrane which is generated by electron transport complexes of the respiratory chain. F-type ATPases consist of two structural domains, F(1) - containing the extramembraneous catalytic core and F(0) - containing the membrane proton channel, linked together by a central stalk and a peripheral stalk. During catalysis, ATP synthesis in the catalytic domain of F(1) is coupled via a rotary mechanism of the central stalk subunits to proton translocation. Part of the complex F(0) domain. Confers tolerance to several abiotic stresses (e.g. salt, mannitol, drought, oxidative and cold stresses), probably by providing additional energy needed for cell homeostasis. This Solanum tuberosum (Potato) protein is ATP synthase small subunit 6, mitochondrial.